Here is a 170-residue protein sequence, read N- to C-terminus: Probable chorismate pyruvate-lyase (170 aa).

Residues arginine 77, leucine 114, and glutamate 157 each contribute to the substrate site.

This sequence belongs to the UbiC family.

The protein localises to the cytoplasm. The catalysed reaction is chorismate = 4-hydroxybenzoate + pyruvate. It participates in cofactor biosynthesis; ubiquinone biosynthesis. Removes the pyruvyl group from chorismate, with concomitant aromatization of the ring, to provide 4-hydroxybenzoate (4HB) for the ubiquinone pathway. In Pasteurella multocida (strain Pm70), this protein is Probable chorismate pyruvate-lyase.